The primary structure comprises 141 residues: Hemoglobin subunit alpha-A (141 aa).

A Globin domain is found at 1–141 (VLTEEDKSRV…VAKTLVSRYR (141 aa)). His58 is an O2 binding site. His87 serves as a coordination point for heme b.

It belongs to the globin family. In terms of assembly, heterotetramer of two alpha chains and two beta chains. As to expression, red blood cells.

Involved in oxygen transport from the lung to the various peripheral tissues. This chain is Hemoglobin subunit alpha-A, found in Drymarchon melanurus erebennus (Texas indigo snake).